The chain runs to 308 residues: MSSGIIFFGTPEFAVPSLKALISRGEKILLVVTQPDKPKGRGKNLQAPEIKKVALQCGLPLCQPEKMKDDNFIKKLKSLNPEFAIVVAYGKILPKEILEIPKHGCINLHASLLPKYRGAAPIQWALINGEKITGVTTMIIDEGLDTGPILLQKEISINDEDNAETLSEKLSVVGAELIIETIDKMRKGIITPKPQTGEITYAPQLKKDDGKINWNNSARKIFNLVRGTYPWPCAYSFLKDERVKIIKTEVLEGNAAPGLIIKAKNELIVGTQEGLLRILLIQPEGKKIMTAKEFISGRKINEGMDSFS.

111-114 (SLLP) is a binding site for (6S)-5,6,7,8-tetrahydrofolate.

Belongs to the Fmt family.

The enzyme catalyses L-methionyl-tRNA(fMet) + (6R)-10-formyltetrahydrofolate = N-formyl-L-methionyl-tRNA(fMet) + (6S)-5,6,7,8-tetrahydrofolate + H(+). Its function is as follows. Attaches a formyl group to the free amino group of methionyl-tRNA(fMet). The formyl group appears to play a dual role in the initiator identity of N-formylmethionyl-tRNA by promoting its recognition by IF2 and preventing the misappropriation of this tRNA by the elongation apparatus. The sequence is that of Methionyl-tRNA formyltransferase from Thermodesulfovibrio yellowstonii (strain ATCC 51303 / DSM 11347 / YP87).